The chain runs to 469 residues: Serine/threonine-protein kinase orb6 (469 aa).

Positions 93-392 constitute a Protein kinase domain; it reads FSTIKVIGKG…AIEIMQHPFF (300 aa). ATP contacts are provided by residues 99 to 107 and lysine 122; that span reads IGKGAFGEV. Aspartate 216 functions as the Proton acceptor in the catalytic mechanism. In terms of domain architecture, AGC-kinase C-terminal spans 393 to 467; that stretch reads TGIDWDHIRE…KKFNYLTMKG (75 aa).

Belongs to the protein kinase superfamily. Ser/Thr protein kinase family. Interacts with mob2.

It catalyses the reaction L-seryl-[protein] + ATP = O-phospho-L-seryl-[protein] + ADP + H(+). The enzyme catalyses L-threonyl-[protein] + ATP = O-phospho-L-threonyl-[protein] + ADP + H(+). Functionally, interacts with pak1/shk1 and coordinates cell morphogenesis with the cell cycle. It is essential for maintenance of cell polarity and is involved in mitotic control. The polypeptide is Serine/threonine-protein kinase orb6 (orb6) (Schizosaccharomyces pombe (strain 972 / ATCC 24843) (Fission yeast)).